Reading from the N-terminus, the 215-residue chain is Sodium channel regulatory subunit beta-2 (215 aa).

An N-terminal signal peptide occupies residues 1–29 (MHRDAWLPRPAFSLTGLSLFFSLVPSGRS). Residues 30–157 (MEVTVPTTLS…LEVPPERDST (128 aa)) are Extracellular-facing. An Ig-like C2-type domain is found at 32-154 (VTVPTTLSVL…QVLLEVPPER (123 aa)). N-linked (GlcNAc...) asparagine glycosylation is found at Asn-42, Asn-66, and Asn-74. Disulfide bonds link Cys-50–Cys-127 and Cys-72–Cys-75. The chain crosses the membrane as a helical span at residues 158–179 (VAVIVGASVGGFLAVVILVLMV). Residues 180–215 (VKCVRRKKEQKLSTDDLKTEEEGKTDGEGNAEDGAK) lie on the Cytoplasmic side of the membrane. Positions 187-215 (KEQKLSTDDLKTEEEGKTDGEGNAEDGAK) are disordered. The span at 189 to 215 (QKLSTDDLKTEEEGKTDGEGNAEDGAK) shows a compositional bias: basic and acidic residues. Position 192 is a phosphoserine (Ser-192). Thr-204 carries the phosphothreonine modification.

This sequence belongs to the sodium channel auxiliary subunit SCN2B (TC 8.A.17) family. A voltage-gated sodium (Nav) channel consists of an ion-conducting pore-forming alpha subunit functional on its own that is regulated by one or more beta subunits. The beta subunit SCN2B is disulfide-linked to the pore-forming alpha subunit. Interacts with SCN1A; regulatory subunit of SCN1A/Nav1.1. Interacts with SCN2A; regulatory subunit of SCN2A/Nav1.2. Interacts with SCN3A; regulatory subunit of SCN3A/Nav1.3. Interacts with SCN5A; regulatory subunit of SCN5A/Nav1.5. Interacts with SCN8A; regulatory subunit of SCN8A/Nav1.6. Interacts with SCN9A; regulatory subunit of SCN9A/Nav1.7. Interacts with SCN10A; regulatory subunit of SCN10A/Nav1.8. Interacts with TNR; may play a crucial role in clustering and regulation of activity of SCN2B-containing Nav channels at nodes of Ranvier.

Its subcellular location is the cell membrane. It localises to the cell projection. The protein localises to the axon. Its function is as follows. Regulatory subunit of multiple voltage-gated sodium (Nav) channels directly mediating the depolarization of excitable membranes. Navs, also called VGSCs (voltage-gated sodium channels) or VDSCs (voltage-dependent sodium channels), operate by switching between closed and open conformations depending on the voltage difference across the membrane. In the open conformation they allow Na(+) ions to selectively pass through the pore, along their electrochemical gradient. The influx of Na+ ions provokes membrane depolarization, initiating the propagation of electrical signals throughout cells and tissues. The accessory beta subunits participate in localization and functional modulation of the Nav channels. Modulates the activity of SCN1A/Nav1.1, SCN2A/Nav1.2, SCN2A/Nav1.3, SCN5A/Nav1.5, SCN8A/Nav1.6, SCN9A/Nav1.7 and SCN10A/Nav1.8. This Rattus norvegicus (Rat) protein is Sodium channel regulatory subunit beta-2.